We begin with the raw amino-acid sequence, 486 residues long: N-succinylglutamate 5-semialdehyde dehydrogenase (486 aa).

220–225 serves as a coordination point for NAD(+); it reads GSSRTG. Catalysis depends on residues glutamate 243 and cysteine 277.

This sequence belongs to the aldehyde dehydrogenase family. AstD subfamily.

The catalysed reaction is N-succinyl-L-glutamate 5-semialdehyde + NAD(+) + H2O = N-succinyl-L-glutamate + NADH + 2 H(+). It functions in the pathway amino-acid degradation; L-arginine degradation via AST pathway; L-glutamate and succinate from L-arginine: step 4/5. Its function is as follows. Catalyzes the NAD-dependent reduction of succinylglutamate semialdehyde into succinylglutamate. The protein is N-succinylglutamate 5-semialdehyde dehydrogenase of Shewanella piezotolerans (strain WP3 / JCM 13877).